Consider the following 201-residue polypeptide: 3-isopropylmalate dehydratase small subunit (201 aa).

The protein belongs to the LeuD family. LeuD type 1 subfamily. Heterodimer of LeuC and LeuD.

It catalyses the reaction (2R,3S)-3-isopropylmalate = (2S)-2-isopropylmalate. It functions in the pathway amino-acid biosynthesis; L-leucine biosynthesis; L-leucine from 3-methyl-2-oxobutanoate: step 2/4. Catalyzes the isomerization between 2-isopropylmalate and 3-isopropylmalate, via the formation of 2-isopropylmaleate. This Escherichia coli O127:H6 (strain E2348/69 / EPEC) protein is 3-isopropylmalate dehydratase small subunit.